The primary structure comprises 254 residues: Probable phosphomannomutase (254 aa).

Asp14 (nucleophile) is an active-site residue. Mg(2+)-binding residues include Asp14 and Asp16. The active-site Proton donor/acceptor is the Asp16. Arg23, Arg129, Arg140, Arg147, Ser185, and Asp187 together coordinate alpha-D-mannose 1-phosphate. Positions 214, 226, 228, and 231 each coordinate Mg(2+).

The protein belongs to the eukaryotic PMM family. In terms of assembly, homodimer.

The protein localises to the cytoplasm. The enzyme catalyses alpha-D-mannose 1-phosphate = D-mannose 6-phosphate. Its pathway is nucleotide-sugar biosynthesis; GDP-alpha-D-mannose biosynthesis; alpha-D-mannose 1-phosphate from D-fructose 6-phosphate: step 2/2. In terms of biological role, involved in the synthesis of the GDP-mannose and dolichol-phosphate-mannose required for a number of critical mannosyl transfer reactions. The protein is Probable phosphomannomutase of Caenorhabditis elegans.